The primary structure comprises 491 residues: Ketol-acid reductoisomerase (NADP(+)) (491 aa).

The KARI N-terminal Rossmann domain occupies 15–208 (AQLGTCRFME…GGHRAGVLES (194 aa)). NADP(+)-binding positions include 45 to 48 (CGAQ), arginine 68, arginine 76, serine 78, and 108 to 110 (DKQ). Histidine 132 is an active-site residue. Glycine 158 contacts NADP(+). 2 consecutive KARI C-terminal knotted domains span residues 209–353 (SFVA…KEQE) and 354–486 (YFDK…MTAM). Mg(2+) contacts are provided by aspartate 217, glutamate 221, glutamate 389, and glutamate 393. Serine 414 provides a ligand contact to substrate.

The protein belongs to the ketol-acid reductoisomerase family. Requires Mg(2+) as cofactor.

The enzyme catalyses (2R)-2,3-dihydroxy-3-methylbutanoate + NADP(+) = (2S)-2-acetolactate + NADPH + H(+). It carries out the reaction (2R,3R)-2,3-dihydroxy-3-methylpentanoate + NADP(+) = (S)-2-ethyl-2-hydroxy-3-oxobutanoate + NADPH + H(+). Its pathway is amino-acid biosynthesis; L-isoleucine biosynthesis; L-isoleucine from 2-oxobutanoate: step 2/4. It participates in amino-acid biosynthesis; L-valine biosynthesis; L-valine from pyruvate: step 2/4. Its function is as follows. Involved in the biosynthesis of branched-chain amino acids (BCAA). Catalyzes an alkyl-migration followed by a ketol-acid reduction of (S)-2-acetolactate (S2AL) to yield (R)-2,3-dihydroxy-isovalerate. In the isomerase reaction, S2AL is rearranged via a Mg-dependent methyl migration to produce 3-hydroxy-3-methyl-2-ketobutyrate (HMKB). In the reductase reaction, this 2-ketoacid undergoes a metal-dependent reduction by NADPH to yield (R)-2,3-dihydroxy-isovalerate. The sequence is that of Ketol-acid reductoisomerase (NADP(+)) from Christiangramia forsetii (strain DSM 17595 / CGMCC 1.15422 / KT0803) (Gramella forsetii).